The following is a 1035-amino-acid chain: Integrin alpha-9 (1035 aa).

The signal sequence occupies residues 1–29 (MGGPAAPRGAGRLRALLLALVVAGIPAGA). The Extracellular segment spans residues 30-981 (YNLDPQRPVH…LEPRGYVVGW (952 aa)). FG-GAP repeat units lie at residues 35–96 (QRPV…PDRR), 111–174 (SCGK…AKGR), 182–232 (EYKK…NTYL), 233–289 (KLND…SGTL), 290–349 (IKIF…GALE), 351–408 (QLAL…GIVP), and 411–474 (SMKL…LPGS). 3 disulfide bridges follow: cysteine 87/cysteine 97, cysteine 142/cysteine 162, and cysteine 179/cysteine 194. Asparagine 225 carries an N-linked (GlcNAc...) asparagine glycan. Ca(2+) is bound by residues aspartate 312, asparagine 314, aspartate 316, aspartate 320, aspartate 373, aspartate 375, aspartate 377, aspartate 381, aspartate 435, aspartate 437, asparagine 439, and aspartate 443. A glycan (N-linked (GlcNAc...) asparagine) is linked at asparagine 476. A disulfide bridge connects residues cysteine 482 and cysteine 491. The N-linked (GlcNAc...) asparagine glycan is linked to asparagine 493. A disulfide bridge connects residues cysteine 497 and cysteine 555. Asparagine 612 carries an N-linked (GlcNAc...) asparagine glycan. Cysteine 620 and cysteine 625 form a disulfide bridge. 4 N-linked (GlcNAc...) asparagine glycosylation sites follow: asparagine 654, asparagine 658, asparagine 672, and asparagine 676. Cysteines 696 and 706 form a disulfide. 2 N-linked (GlcNAc...) asparagine glycosylation sites follow: asparagine 807 and asparagine 854. Disulfide bonds link cysteine 855-cysteine 891 and cysteine 898-cysteine 903. Asparagine 904 is a glycosylation site (N-linked (GlcNAc...) asparagine). A helical transmembrane segment spans residues 982–1002 (IIAISLLVGILIFLLLAVLLW). Topologically, residues 1003-1035 (KMGFFRRRYKEIIEAEKNRKENEDSWDWVQKNQ) are cytoplasmic. The GFFKR motif motif lies at 1005 to 1009 (GFFRR).

Belongs to the integrin alpha chain family. In terms of assembly, heterodimer of an alpha and a beta subunit. Alpha-9 (ITGA9) associates with beta-1 (ITGB1). Integrin ITGA9:ITGB1 interacts with FBLN5 (via N-terminus). Integrin ITGA9:ITGB1 interacts with SPP1/OPN (via N-terminus). Integrin ITGA9:ITGB1 interacts with TNC/TNFN3 (via the 3rd Fibronectin type-III domain). Integrin ITGA9:ITGB1 interacts with SVEP1/polydom (via Sushi domain 21); thereby inhibits Ca(2+) intracellular signaling and as a result represses vasocontraction. In terms of tissue distribution, expressed in vascular smooth muscle cells (at protein level). Expressed in the airway epithelium (at protein level).

The protein resides in the membrane. In terms of biological role, integrin alpha-9/beta-1 (ITGA9:ITGB1) is a receptor for VCAM1, cytotactin and osteopontin. It recognizes the sequence A-E-I-D-G-I-E-L in cytotactin. ITGA9:ITGB1 may play a crucial role in SVEP1/polydom-mediated myoblast cell adhesion. Integrin ITGA9:ITGB1 represses PRKCA-mediated L-type voltage-gated channel Ca(2+) influx and ROCK-mediated calcium sensitivity in vascular smooth muscle cells via its interaction with SVEP1, thereby inhibiting vasocontraction. This is Integrin alpha-9 (ITGA9) from Homo sapiens (Human).